We begin with the raw amino-acid sequence, 158 residues long: Transcriptional repressor NrdR (158 aa).

The segment at 1-22 (MRCPYCGSEDTQVKDSRPAEDN) is disordered. A zinc finger spans residues 3 to 34 (CPYCGSEDTQVKDSRPAEDNTSIRRRRICPDC). Residues 11–22 (TQVKDSRPAEDN) are compositionally biased toward basic and acidic residues. The ATP-cone domain occupies 49–139 (LMVIKKTGRK…VYRDFSLAED (91 aa)).

This sequence belongs to the NrdR family. It depends on Zn(2+) as a cofactor.

In terms of biological role, negatively regulates transcription of bacterial ribonucleotide reductase nrd genes and operons by binding to NrdR-boxes. This Rhizobium etli (strain CIAT 652) protein is Transcriptional repressor NrdR.